Here is a 427-residue protein sequence, read N- to C-terminus: Bifunctional enzyme MtnB/MtnX (427 aa).

Positions 1–221 (MRKPLIICDF…LEETAEVKEW (221 aa)) are HK-MTPenyl-1-P phosphatase. The interval 222–427 (MSEQKRQELA…KLKALQAYHV (206 aa)) is MTRu-1-P dehydratase. Zn(2+) is bound by residues H317 and H319.

It in the N-terminal section; belongs to the HAD-like hydrolase superfamily. MtnX family. The protein in the C-terminal section; belongs to the aldolase class II family. MtnB subfamily. As to quaternary structure, homotetramer. Zn(2+) is required as a cofactor.

The enzyme catalyses 5-(methylsulfanyl)-D-ribulose 1-phosphate = 5-methylsulfanyl-2,3-dioxopentyl phosphate + H2O. It catalyses the reaction 2-hydroxy-5-methylsulfanyl-3-oxopent-1-enyl phosphate + H2O = 1,2-dihydroxy-5-(methylsulfanyl)pent-1-en-3-one + phosphate. Its pathway is amino-acid biosynthesis; L-methionine biosynthesis via salvage pathway; L-methionine from S-methyl-5-thio-alpha-D-ribose 1-phosphate: step 2/6. It participates in amino-acid biosynthesis; L-methionine biosynthesis via salvage pathway; L-methionine from S-methyl-5-thio-alpha-D-ribose 1-phosphate: step 4/6. In terms of biological role, catalyzes the dehydration of methylthioribulose-1-phosphate (MTRu-1-P) into 2,3-diketo-5-methylthiopentyl-1-phosphate (DK-MTP-1-P). Functionally, dephosphorylates 2-hydroxy-3-keto-5-methylthiopentenyl-1-phosphate (HK-MTPenyl-1-P) yielding 1,2-dihydroxy-3-keto-5-methylthiopentene (DHK-MTPene). The protein is Bifunctional enzyme MtnB/MtnX (mtnB/mtnX) of Bacillus licheniformis (strain ATCC 14580 / DSM 13 / JCM 2505 / CCUG 7422 / NBRC 12200 / NCIMB 9375 / NCTC 10341 / NRRL NRS-1264 / Gibson 46).